A 464-amino-acid chain; its full sequence is NADH dehydrogenase [ubiquinone] flavoprotein 1, mitochondrial (464 aa).

Residues 1–20 (MLAARRLLGWSLPARVSVRF) constitute a mitochondrion transit peptide. Lysine 81 is modified (N6-acetyllysine; alternate). Lysine 81 carries the N6-succinyllysine; alternate modification. 87–96 (GRGGAGFPTG) provides a ligand contact to NADH. Lysine 104 carries the N6-acetyllysine modification. 199–247 (RGAGAYICGEETALIESIEGKQGKPRLKPPFPADVGVFGCPTTVANVET) provides a ligand contact to FMN. An Omega-N-methylarginine modification is found at arginine 257. Position 375 is an N6-acetyllysine (lysine 375). Cysteine 379, cysteine 382, cysteine 385, and cysteine 425 together coordinate [4Fe-4S] cluster.

It belongs to the complex I 51 kDa subunit family. In terms of assembly, core subunit of respiratory chain NADH dehydrogenase (Complex I) which is composed of 45 different subunits. This is a component of the flavoprotein-sulfur (FP) fragment of the enzyme. Interacts with RAB5IF. FMN serves as cofactor. Requires [4Fe-4S] cluster as cofactor.

The protein localises to the mitochondrion inner membrane. The enzyme catalyses a ubiquinone + NADH + 5 H(+)(in) = a ubiquinol + NAD(+) + 4 H(+)(out). In terms of biological role, core subunit of the mitochondrial membrane respiratory chain NADH dehydrogenase (Complex I) which catalyzes electron transfer from NADH through the respiratory chain, using ubiquinone as an electron acceptor. Part of the peripheral arm of the enzyme, where the electrons from NADH are accepted by flavin mononucleotide (FMN) and then passed along a chain of iron-sulfur clusters by electron tunnelling to the final acceptor ubiquinone. Contains FMN, which is the initial electron acceptor as well as one iron-sulfur cluster. The chain is NADH dehydrogenase [ubiquinone] flavoprotein 1, mitochondrial from Pongo pygmaeus (Bornean orangutan).